The following is a 678-amino-acid chain: MHGRPRNASKPEEEAASAAKAVQLRSLQSQFMTNHHDKIYTNEAIELSTKLLEINPEAYTAWNYRKLAVEDRLARIEPDPNLVSAILDEELRVVESALRQNFKSYGAWHHRKWVLSKGHSSVGNELRLLEKFQKLDSRNFHAWNYRRFVVELTNRSEQDELQYTDDMINNNFSNYSAWHNRSVLLSSLLAQNADGFMPNIKIPEEYDFVHSAIFTEPDDQSGWFYHLWLLDQTLNVETPLLTSSWPSHGSSIILSGAGCLSGSSSMFTTFCSESGSFPLILYFDQAVGGVSSSTVTIDSELKGNEGLVWEPIPNKNSQVSCVWVARLKYVSSDPCEYKVKIRVGNSPGIVSSRGYNFNAPYEFVFTAHVHDTVEDSQEGIVSWTDGFDIWDAKSKDLNSLVTLDRLNAEMDFKWRQEAIDSEVECFGILPDSKIGKLTLARLLMAREAMVSDDAVKGVHYEEILQLYNDLMALDSSHYQYYKDEHSKAFLHKVTSSSESLSRHLLRYRDMNNLVCLRLNNLSLSRIASVEKLLFVQMLDLSHNELHSTEGLEAMQLLSCLNLSHNRIRSFSALDSLRHVKQLKVLDVSHNHIGKHSVDTTRYLCSSPLSNSELGQDDVGKQNPGLVTKYWDAYCVLTDLNLKQLDIAGNEIAGEEFSSFVLQVVPKLVWLDGQKKLGN.

5 PFTA repeats span residues 40 to 74 (YTNE…DRLA), 86 to 120 (ILDE…KGHS), 121 to 155 (SVGN…LTNR), 156 to 190 (SEQD…SLLA), and 201 to 235 (KIPE…QTLN). LRR repeat units lie at residues 510–532 (MNNL…VEKL), 533–554 (LFVQ…LEAM), 555–578 (QLLS…SLRH), 580–604 (KQLK…RYLC), and 638–663 (DLNL…VLQV).

This sequence belongs to the protein prenyltransferase subunit alpha family. Heterotrimer composed of the alpha subunit RGTA, the beta subunit RGTB and REP; within this trimer, RGTA and RGTB form the catalytic component, while REP mediates peptide substrate binding.

The catalysed reaction is geranylgeranyl diphosphate + L-cysteinyl-[protein] = S-geranylgeranyl-L-cysteinyl-[protein] + diphosphate. Its activity is regulated as follows. The enzymatic reaction requires the aid of the Rab escort protein REP. In terms of biological role, catalyzes the transfer of a geranylgeranyl moiety from geranylgeranyl diphosphate to both cysteines of Rab proteins with the C-terminal sequence -CCXX, CXXX, -XCCX and -XCXC, such as RABA1A, RABA2A, RABF2A and RABG2. In vitro, can prenylate PGGTI targets with the C-terminal Cys-aliphatic-aliphatic-X (CaaX) with leucine in the terminal position. Substrates with the C-terminal sequence -CSIL such as ARAC11/ROP1 or GG2/AGG2 are prenylated independently of REP and when the alpha subunit is associated with a beta subunit (RGTB1 or RGTB2). This chain is Geranylgeranyl transferase type-2 subunit alpha 1, found in Arabidopsis thaliana (Mouse-ear cress).